The primary structure comprises 403 residues: Stearoyl-[acyl-carrier-protein] 9-desaturase 4, chloroplastic (403 aa).

The transit peptide at 1–44 directs the protein to the chloroplast; it reads MALLLNSTMTVAMKQNPATAVSFMQTTCLGSSFSPPRHLQVSCV. 6 residues coordinate Fe cation: glutamate 140, glutamate 178, histidine 181, glutamate 231, glutamate 264, and histidine 267.

This sequence belongs to the fatty acid desaturase type 2 family. As to quaternary structure, homodimer. The cofactor is Fe(2+). As to expression, preferentially expressed in roots.

Its subcellular location is the plastid. It localises to the chloroplast. The enzyme catalyses octadecanoyl-[ACP] + 2 reduced [2Fe-2S]-[ferredoxin] + O2 + 2 H(+) = (9Z)-octadecenoyl-[ACP] + 2 oxidized [2Fe-2S]-[ferredoxin] + 2 H2O. Its pathway is lipid metabolism; fatty acid metabolism. In terms of biological role, converts stearoyl-ACP to oleoyl-ACP by introduction of a cis double bond between carbons 9 and 10 of the acyl chain. The protein is Stearoyl-[acyl-carrier-protein] 9-desaturase 4, chloroplastic (S-ACP-DES4) of Arabidopsis thaliana (Mouse-ear cress).